The sequence spans 490 residues: tRNA modification GTPase MnmE (490 aa).

Residues Arg23, Glu80, and Lys133 each coordinate (6S)-5-formyl-5,6,7,8-tetrahydrofolate. The region spanning 229–412 is the TrmE-type G domain; sequence GIEVVIAGQP…LRRILLEVAG (184 aa). Asn239 contacts K(+). GTP-binding positions include 239–244, 258–264, and 283–286; these read NAGKSS, TPVAGTT, and DTAG. Ser243 serves as a coordination point for Mg(2+). K(+) contacts are provided by Thr258, Val260, and Thr263. Position 264 (Thr264) interacts with Mg(2+). The segment covering 366-382 has biased composition (low complexity); that stretch reads PTAPTESAAVPPASARP. The segment at 366–388 is disordered; sequence PTAPTESAAVPPASARPAPAPRP. Residue 393 to 395 participates in GTP binding; sequence SAR. (6S)-5-formyl-5,6,7,8-tetrahydrofolate is bound at residue Lys490.

The protein belongs to the TRAFAC class TrmE-Era-EngA-EngB-Septin-like GTPase superfamily. TrmE GTPase family. Homodimer. Heterotetramer of two MnmE and two MnmG subunits. The cofactor is K(+).

It localises to the cytoplasm. In terms of biological role, exhibits a very high intrinsic GTPase hydrolysis rate. Involved in the addition of a carboxymethylaminomethyl (cmnm) group at the wobble position (U34) of certain tRNAs, forming tRNA-cmnm(5)s(2)U34. The protein is tRNA modification GTPase MnmE of Verminephrobacter eiseniae (strain EF01-2).